A 433-amino-acid chain; its full sequence is GTPase Obg (433 aa).

Residues Met-1–Leu-158 enclose the Obg domain. Positions Ala-159 to Glu-329 constitute an OBG-type G domain. GTP contacts are provided by residues Gly-165–Ser-172, Phe-190–Val-194, Asp-212–Gly-215, Asn-282–Asp-285, and Ser-310–Ala-312. Positions 172 and 192 each coordinate Mg(2+). The 79-residue stretch at Lys-350–Asp-428 folds into the OCT domain.

It belongs to the TRAFAC class OBG-HflX-like GTPase superfamily. OBG GTPase family. As to quaternary structure, monomer. Requires Mg(2+) as cofactor.

It localises to the cytoplasm. An essential GTPase which binds GTP, GDP and possibly (p)ppGpp with moderate affinity, with high nucleotide exchange rates and a fairly low GTP hydrolysis rate. Plays a role in control of the cell cycle, stress response, ribosome biogenesis and in those bacteria that undergo differentiation, in morphogenesis control. The chain is GTPase Obg from Geobacillus thermodenitrificans (strain NG80-2).